The sequence spans 289 residues: Phosphatidylserine decarboxylase proenzyme (289 aa).

Residues Asp-92, His-149, and Ser-254 each act as charge relay system; for autoendoproteolytic cleavage activity in the active site. Ser-254 functions as the Schiff-base intermediate with substrate; via pyruvic acid; for decarboxylase activity in the catalytic mechanism. Position 254 is a pyruvic acid (Ser); by autocatalysis (Ser-254).

Belongs to the phosphatidylserine decarboxylase family. PSD-B subfamily. Prokaryotic type I sub-subfamily. Heterodimer of a large membrane-associated beta subunit and a small pyruvoyl-containing alpha subunit. Pyruvate is required as a cofactor. Post-translationally, is synthesized initially as an inactive proenzyme. Formation of the active enzyme involves a self-maturation process in which the active site pyruvoyl group is generated from an internal serine residue via an autocatalytic post-translational modification. Two non-identical subunits are generated from the proenzyme in this reaction, and the pyruvate is formed at the N-terminus of the alpha chain, which is derived from the carboxyl end of the proenzyme. The autoendoproteolytic cleavage occurs by a canonical serine protease mechanism, in which the side chain hydroxyl group of the serine supplies its oxygen atom to form the C-terminus of the beta chain, while the remainder of the serine residue undergoes an oxidative deamination to produce ammonia and the pyruvoyl prosthetic group on the alpha chain. During this reaction, the Ser that is part of the protease active site of the proenzyme becomes the pyruvoyl prosthetic group, which constitutes an essential element of the active site of the mature decarboxylase.

It is found in the cell membrane. It catalyses the reaction a 1,2-diacyl-sn-glycero-3-phospho-L-serine + H(+) = a 1,2-diacyl-sn-glycero-3-phosphoethanolamine + CO2. Its pathway is phospholipid metabolism; phosphatidylethanolamine biosynthesis; phosphatidylethanolamine from CDP-diacylglycerol: step 2/2. Functionally, catalyzes the formation of phosphatidylethanolamine (PtdEtn) from phosphatidylserine (PtdSer). This is Phosphatidylserine decarboxylase proenzyme from Pseudomonas aeruginosa (strain ATCC 15692 / DSM 22644 / CIP 104116 / JCM 14847 / LMG 12228 / 1C / PRS 101 / PAO1).